A 73-amino-acid polypeptide reads, in one-letter code: U3-agatoxin-Ao1i (73 aa).

Residues 1–20 (MRTIISLLLLSAMVFAEIEA) form the signal peptide. Positions 21–34 (ISLEEGLQLFEGER) are excised as a propeptide. 4 disulfide bridges follow: C36–C52, C43–C57, C51–C67, and C59–C65. Residue S71 is modified to Serine amide.

This sequence belongs to the neurotoxin 07 (Beta/delta-agtx) family. 03 (aga-4) subfamily. Aga sub-subfamily. Expressed by the venom gland.

It localises to the secreted. Insecticidal neurotoxin that induces an irreversible spastic paralysis when injected into insects. Modifies presynaptic voltage-gated sodium channels (Nav), causing them to open at the normal resting potential of the nerve. This leads to spontaneous release of neurotransmitter and repetitive action potentials in motor neurons. The polypeptide is U3-agatoxin-Ao1i (Agelena orientalis (Funnel-web spider)).